A 20-amino-acid chain; its full sequence is Malate dehydrogenase (20 aa).

11-17 provides a ligand contact to NAD(+); sequence GAAGQIG.

It belongs to the LDH/MDH superfamily. MDH type 2 family.

The enzyme catalyses (S)-malate + NAD(+) = oxaloacetate + NADH + H(+). Its function is as follows. Catalyzes the reversible oxidation of malate to oxaloacetate. The polypeptide is Malate dehydrogenase (mdh) (Kibdelosporangium aridum).